Reading from the N-terminus, the 463-residue chain is Asparagine--tRNA ligase (463 aa).

The protein belongs to the class-II aminoacyl-tRNA synthetase family. Homodimer.

It localises to the cytoplasm. It carries out the reaction tRNA(Asn) + L-asparagine + ATP = L-asparaginyl-tRNA(Asn) + AMP + diphosphate + H(+). This chain is Asparagine--tRNA ligase, found in Bacillus cytotoxicus (strain DSM 22905 / CIP 110041 / 391-98 / NVH 391-98).